An 81-amino-acid chain; its full sequence is Apolipoprotein C-I, acidic form (81 aa).

The N-terminal stretch at 1–24 (MRLFLSLLVVVLSIVLEGPTPAQG) is a signal peptide.

Belongs to the apolipoprotein C1 family.

The protein resides in the secreted. This chain is Apolipoprotein C-I, acidic form (APOC1A), found in Theropithecus gelada (Gelada baboon).